Here is a 425-residue protein sequence, read N- to C-terminus: Serine--tRNA ligase (425 aa).

230–232 (TGE) is an L-serine binding site. 261 to 263 (RKE) contributes to the ATP binding site. Glu-284 provides a ligand contact to L-serine. Residue 348 to 351 (EISS) participates in ATP binding. Ser-385 contacts L-serine.

This sequence belongs to the class-II aminoacyl-tRNA synthetase family. Type-1 seryl-tRNA synthetase subfamily. In terms of assembly, homodimer. The tRNA molecule binds across the dimer.

The protein localises to the cytoplasm. It catalyses the reaction tRNA(Ser) + L-serine + ATP = L-seryl-tRNA(Ser) + AMP + diphosphate + H(+). It carries out the reaction tRNA(Sec) + L-serine + ATP = L-seryl-tRNA(Sec) + AMP + diphosphate + H(+). Its pathway is aminoacyl-tRNA biosynthesis; selenocysteinyl-tRNA(Sec) biosynthesis; L-seryl-tRNA(Sec) from L-serine and tRNA(Sec): step 1/1. In terms of biological role, catalyzes the attachment of serine to tRNA(Ser). Is also able to aminoacylate tRNA(Sec) with serine, to form the misacylated tRNA L-seryl-tRNA(Sec), which will be further converted into selenocysteinyl-tRNA(Sec). The protein is Serine--tRNA ligase of Wolbachia sp. subsp. Brugia malayi (strain TRS).